Consider the following 122-residue polypeptide: Large ribosomal subunit protein uL14 (122 aa).

This sequence belongs to the universal ribosomal protein uL14 family. In terms of assembly, part of the 50S ribosomal subunit. Forms a cluster with proteins L3 and L19. In the 70S ribosome, L14 and L19 interact and together make contacts with the 16S rRNA in bridges B5 and B8.

Functionally, binds to 23S rRNA. Forms part of two intersubunit bridges in the 70S ribosome. The sequence is that of Large ribosomal subunit protein uL14 from Pelobacter propionicus (strain DSM 2379 / NBRC 103807 / OttBd1).